A 1788-amino-acid polypeptide reads, in one-letter code: Laminin subunit beta-1 (1788 aa).

The first 24 residues, 1 to 24, serve as a signal peptide directing secretion; the sequence is MLELRLIVVIVLALLSWQWDPVDS. The tract at residues 23 to 43 is disordered; that stretch reads DSQRPPQHGRRDRPKYPPNKF. In terms of domain architecture, Laminin N-terminal spans 50–287; that stretch reads ERSSCYPATG…GISNMVVRGS (238 aa). N-linked (GlcNAc...) asparagine glycosylation is found at Asn-138, Asn-201, and Asn-232. 19 disulfide bridges follow: Cys-288-Cys-297, Cys-290-Cys-318, Cys-320-Cys-329, Cys-332-Cys-352, Cys-355-Cys-364, Cys-357-Cys-382, Cys-385-Cys-394, Cys-397-Cys-415, Cys-418-Cys-431, Cys-420-Cys-446, Cys-448-Cys-457, Cys-460-Cys-475, Cys-478-Cys-491, Cys-480-Cys-498, Cys-500-Cys-509, Cys-512-Cys-526, Cys-529-Cys-541, Cys-531-Cys-548, and Cys-550-Cys-559. Laminin EGF-like domains are found at residues 288 to 354, 355 to 417, 418 to 477, and 478 to 528; these read CSCY…ACKK, CECN…VCQP, CDCD…GCEP, and CTCN…GCSL. N-linked (GlcNAc...) asparagine glycosylation occurs at Asn-487. Residues 529–559 form the Laminin EGF-like 5; truncated domain; that stretch reads CNCDAGGSYDNYCDVISGQCRCRPHMTGRSC. In terms of domain architecture, Laminin IV type B spans 567–783; that stretch reads FIPLLPEVHE…LDNILSVFVH (217 aa). Asn-591 is a glycosylation site (N-linked (GlcNAc...) asparagine). The Cell attachment site motif lies at 641–643; it reads RGD. Disulfide bonds link Cys-789-Cys-801, Cys-791-Cys-808, Cys-810-Cys-819, Cys-822-Cys-834, Cys-837-Cys-849, Cys-839-Cys-856, Cys-858-Cys-867, Cys-870-Cys-880, Cys-883-Cys-892, Cys-885-Cys-899, Cys-902-Cys-911, Cys-914-Cys-930, Cys-933-Cys-949, Cys-935-Cys-960, Cys-962-Cys-971, Cys-974-Cys-988, Cys-991-Cys-1005, Cys-993-Cys-1012, Cys-1015-Cys-1024, Cys-1027-Cys-1040, Cys-1043-Cys-1057, Cys-1045-Cys-1064, Cys-1066-Cys-1075, Cys-1078-Cys-1091, Cys-1094-Cys-1106, Cys-1096-Cys-1113, Cys-1115-Cys-1124, Cys-1127-Cys-1139, Cys-1142-Cys-1154, Cys-1144-Cys-1161, Cys-1163-Cys-1172, and Cys-1175-Cys-1186. 8 Laminin EGF-like domains span residues 789–836, 837–882, 883–932, 933–990, 991–1042, 1043–1093, 1094–1141, and 1142–1188; these read CNCN…GCKA, CDCN…ECRV, CQCN…GCRP, CRCP…TCSK, CECS…NCQQ, CECD…GCES, CNCD…KCQP, and CECD…HCSP. Asn-1051 carries N-linked (GlcNAc...) asparagine glycosylation. The interval 1189–1405 is domain II; sequence CGECFNNWDL…SQIPELNNQV (217 aa). Asn-1246, Asn-1301, Asn-1330, and Asn-1341 each carry an N-linked (GlcNAc...) asparagine glycan. Residues 1255 to 1405 are a coiled coil; the sequence is EKLDYETQSL…SQIPELNNQV (151 aa). Positions 1406–1432 are domain alpha; sequence CGKPGDPCDSLCGGAGCGHCGGFLSCE. Positions 1433–1788 are domain I; sequence HGAKTHSEEA…RGSHYRQCYT (356 aa). Positions 1453–1505 form a coiled coil; that stretch reads ITSKKDQADQTIRALTQAKLNASEAYEKAKRGFEQSERYLNQTNANIKLAENL. Asn-1473, Asn-1493, and Asn-1515 each carry an N-linked (GlcNAc...) asparagine glycan. Residues 1540–1561 adopt a coiled-coil conformation; the sequence is EEIETLGDQINRAVSSLKNVEA. Asn-1581, Asn-1644, and Asn-1703 each carry an N-linked (GlcNAc...) asparagine glycan. Positions 1608 to 1762 form a coiled coil; it reads QGKAKDAIQQ…QQLLRLQAEI (155 aa). The interval 1690–1719 is disordered; the sequence is GEANNLQSATSATNQTLTDRASRSENARER. The span at 1693-1708 shows a compositional bias: polar residues; that stretch reads NNLQSATSATNQTLTD. Basic and acidic residues predominate over residues 1709–1719; the sequence is RASRSENARER.

Laminin is a complex glycoprotein, consisting of three different polypeptide chains (alpha, beta, gamma), which are bound to each other by disulfide bonds into a cross-shaped molecule comprising one long and three short arms with globules at each end. In terms of tissue distribution, found in the basement membranes (major component).

The protein resides in the secreted. Its subcellular location is the extracellular space. It is found in the extracellular matrix. It localises to the basement membrane. In terms of biological role, binding to cells via a high affinity receptor, laminin is thought to mediate the attachment, migration and organization of cells into tissues during embryonic development by interacting with other extracellular matrix components. Required for Ndg localization to the basement membrane. This Drosophila melanogaster (Fruit fly) protein is Laminin subunit beta-1 (LanB1).